Consider the following 466-residue polypeptide: Uronate isomerase (466 aa).

The protein belongs to the metallo-dependent hydrolases superfamily. Uronate isomerase family.

It carries out the reaction D-glucuronate = D-fructuronate. The catalysed reaction is aldehydo-D-galacturonate = keto-D-tagaturonate. It functions in the pathway carbohydrate metabolism; pentose and glucuronate interconversion. The protein is Uronate isomerase (uxaC) of Brucella melitensis biotype 1 (strain ATCC 23456 / CCUG 17765 / NCTC 10094 / 16M).